Consider the following 167-residue polypeptide: 6,7-dimethyl-8-ribityllumazine synthase (167 aa).

Residues Phe24, 58 to 60, and 82 to 84 contribute to the 5-amino-6-(D-ribitylamino)uracil site; these read ALE and AVV. A (2S)-2-hydroxy-3-oxobutyl phosphate-binding site is contributed by 87–88; it reads ET. His90 functions as the Proton donor in the catalytic mechanism. Asn115 lines the 5-amino-6-(D-ribitylamino)uracil pocket. Arg129 is a (2S)-2-hydroxy-3-oxobutyl phosphate binding site.

Belongs to the DMRL synthase family.

It carries out the reaction (2S)-2-hydroxy-3-oxobutyl phosphate + 5-amino-6-(D-ribitylamino)uracil = 6,7-dimethyl-8-(1-D-ribityl)lumazine + phosphate + 2 H2O + H(+). The protein operates within cofactor biosynthesis; riboflavin biosynthesis; riboflavin from 2-hydroxy-3-oxobutyl phosphate and 5-amino-6-(D-ribitylamino)uracil: step 1/2. Functionally, catalyzes the formation of 6,7-dimethyl-8-ribityllumazine by condensation of 5-amino-6-(D-ribitylamino)uracil with 3,4-dihydroxy-2-butanone 4-phosphate. This is the penultimate step in the biosynthesis of riboflavin. In Cupriavidus pinatubonensis (strain JMP 134 / LMG 1197) (Cupriavidus necator (strain JMP 134)), this protein is 6,7-dimethyl-8-ribityllumazine synthase.